Reading from the N-terminus, the 104-residue chain is UPF0212 protein PH1312 (104 aa).

The protein belongs to the UPF0212 family.

This is UPF0212 protein PH1312 from Pyrococcus horikoshii (strain ATCC 700860 / DSM 12428 / JCM 9974 / NBRC 100139 / OT-3).